Reading from the N-terminus, the 480-residue chain is Glutamyl-tRNA(Gln) amidotransferase subunit A (480 aa).

Catalysis depends on charge relay system residues Lys74 and Ser149. The Acyl-ester intermediate role is filled by Ser173.

It belongs to the amidase family. GatA subfamily. Heterotrimer of A, B and C subunits.

It catalyses the reaction L-glutamyl-tRNA(Gln) + L-glutamine + ATP + H2O = L-glutaminyl-tRNA(Gln) + L-glutamate + ADP + phosphate + H(+). Functionally, allows the formation of correctly charged Gln-tRNA(Gln) through the transamidation of misacylated Glu-tRNA(Gln) in organisms which lack glutaminyl-tRNA synthetase. The reaction takes place in the presence of glutamine and ATP through an activated gamma-phospho-Glu-tRNA(Gln). This is Glutamyl-tRNA(Gln) amidotransferase subunit A from Ruthia magnifica subsp. Calyptogena magnifica.